Reading from the N-terminus, the 378-residue chain is Ribosomal RNA large subunit methyltransferase G (378 aa).

The protein belongs to the methyltransferase superfamily. RlmG family.

The protein resides in the cytoplasm. The enzyme catalyses guanosine(1835) in 23S rRNA + S-adenosyl-L-methionine = N(2)-methylguanosine(1835) in 23S rRNA + S-adenosyl-L-homocysteine + H(+). Specifically methylates the guanine in position 1835 (m2G1835) of 23S rRNA. The protein is Ribosomal RNA large subunit methyltransferase G of Citrobacter koseri (strain ATCC BAA-895 / CDC 4225-83 / SGSC4696).